Consider the following 73-residue polypeptide: Putative defensin-like protein 42 (73 aa).

Intrachain disulfides connect Cys6–Cys58, Cys18–Cys41, Cys27–Cys50, and Cys31–Cys52.

This sequence belongs to the DEFL family.

This chain is Putative defensin-like protein 42, found in Arabidopsis thaliana (Mouse-ear cress).